The sequence spans 393 residues: S-adenosylmethionine synthase 3 (393 aa).

E9 is a binding site for Mg(2+). Residue H15 participates in ATP binding. E43 provides a ligand contact to K(+). Residues E56 and Q99 each contribute to the L-methionine site. ATP-binding positions include 167–169, 235–238, D246, 252–253, A269, K273, and K277; these read DGK, SGRF, and RK. D246 lines the L-methionine pocket. Residue K277 participates in L-methionine binding.

It belongs to the AdoMet synthase family. As to quaternary structure, homotetramer. Mn(2+) serves as cofactor. Requires Mg(2+) as cofactor. It depends on Co(2+) as a cofactor. The cofactor is K(+).

The protein localises to the cytoplasm. The enzyme catalyses L-methionine + ATP + H2O = S-adenosyl-L-methionine + phosphate + diphosphate. It participates in amino-acid biosynthesis; S-adenosyl-L-methionine biosynthesis; S-adenosyl-L-methionine from L-methionine: step 1/1. Functionally, catalyzes the formation of S-adenosylmethionine from methionine and ATP. The reaction comprises two steps that are both catalyzed by the same enzyme: formation of S-adenosylmethionine (AdoMet) and triphosphate, and subsequent hydrolysis of the triphosphate. In Petunia hybrida (Petunia), this protein is S-adenosylmethionine synthase 3 (SAM3).